A 198-amino-acid polypeptide reads, in one-letter code: Translation initiation factor IF-3 (198 aa).

Residues 168–198 (SLAPKKAGSPKKAETDTAKKENPKKAVETKE) form a disordered region. Residues 178–198 (KKAETDTAKKENPKKAVETKE) show a composition bias toward basic and acidic residues.

This sequence belongs to the IF-3 family. As to quaternary structure, monomer.

The protein localises to the cytoplasm. Functionally, IF-3 binds to the 30S ribosomal subunit and shifts the equilibrium between 70S ribosomes and their 50S and 30S subunits in favor of the free subunits, thus enhancing the availability of 30S subunits on which protein synthesis initiation begins. The protein is Translation initiation factor IF-3 of Phocaeicola vulgatus (strain ATCC 8482 / DSM 1447 / JCM 5826 / CCUG 4940 / NBRC 14291 / NCTC 11154) (Bacteroides vulgatus).